A 370-amino-acid polypeptide reads, in one-letter code: Alpha-ketoglutarate-dependent xanthine dioxygenase xanA (370 aa).

Histidine 107 lines the substrate pocket. 2 residues coordinate Fe cation: histidine 149 and aspartate 151. 2-oxoglutarate contacts are provided by threonine 195 and tryptophan 325. Residue histidine 340 coordinates Fe cation. Arginine 352 lines the 2-oxoglutarate pocket.

Belongs to the TfdA dioxygenase family. Fe(2+) serves as cofactor. Glycosylated. Is subject to both N- and O-linked glycosylation. Post-translationally, phosphorylated.

The protein resides in the cytoplasm. The protein localises to the cytosol. It carries out the reaction xanthine + 2-oxoglutarate + O2 = urate + succinate + CO2. Its activity is regulated as follows. Cu(2+) and Zn(2+) completely inhibit the xanthine dioxygenase activity, whereas Co(2+), Mn(2+), and Ni(2+) partially inhibit the activity. The inactive metal ions are presumed to compete for the Fe(2+)-binding site. N-oxalylglycine (NOG), a known inhibitor of several Fe(2+)/alpha-ketoglutarate-dependent dioxygenase family members, competes with alpha-ketoglutarate and provides a Ki of 0.12 uM for inhibition. 6,8-dihydroxypurine acts as a slow-binding competitive inhibitor. The thiol-specific inhibitors 5,5'-dithiobis(2-nitrobenzoic acid) (DTNB) and iodoacetamide, inhibit also the catalytic activity. Its function is as follows. Alpha-ketoglutarate-dependent xanthine dioxygenase is a non-heme mononuclear Fe(2+) enzyme that decarboxylates alpha-ketoglutarate to succinate and CO(2) while hydroxylating xanthine to generate uric acid. Allows xanthine utilization as a nitrogen source. Whereas xanA is highly specific for xanthine, alpha-ketoadipic acid can replace alpha-ketoglutarate as a cosubstrate. Exhibits ferroxidase activity in the absence of substrates. This Emericella nidulans (Aspergillus nidulans) protein is Alpha-ketoglutarate-dependent xanthine dioxygenase xanA.